We begin with the raw amino-acid sequence, 269 residues long: Tryptophan synthase alpha chain (269 aa).

Residues Glu49 and Asp60 each act as proton acceptor in the active site.

This sequence belongs to the TrpA family. Tetramer of two alpha and two beta chains.

The catalysed reaction is (1S,2R)-1-C-(indol-3-yl)glycerol 3-phosphate + L-serine = D-glyceraldehyde 3-phosphate + L-tryptophan + H2O. It functions in the pathway amino-acid biosynthesis; L-tryptophan biosynthesis; L-tryptophan from chorismate: step 5/5. In terms of biological role, the alpha subunit is responsible for the aldol cleavage of indoleglycerol phosphate to indole and glyceraldehyde 3-phosphate. The polypeptide is Tryptophan synthase alpha chain (Pseudomonas entomophila (strain L48)).